The sequence spans 144 residues: Transcription antitermination protein NusB (144 aa).

The protein belongs to the NusB family.

In terms of biological role, involved in transcription antitermination. Required for transcription of ribosomal RNA (rRNA) genes. Binds specifically to the boxA antiterminator sequence of the ribosomal RNA (rrn) operons. The polypeptide is Transcription antitermination protein NusB (Carboxydothermus hydrogenoformans (strain ATCC BAA-161 / DSM 6008 / Z-2901)).